A 569-amino-acid chain; its full sequence is Oxygen-dependent choline dehydrogenase (569 aa).

9-38 (DYVIIGGGSAGSVLGNRLSEDKDKEVLVLE) provides a ligand contact to FAD. The active-site Proton acceptor is His475.

The protein belongs to the GMC oxidoreductase family. The cofactor is FAD.

It carries out the reaction choline + A = betaine aldehyde + AH2. The enzyme catalyses betaine aldehyde + NAD(+) + H2O = glycine betaine + NADH + 2 H(+). Its pathway is amine and polyamine biosynthesis; betaine biosynthesis via choline pathway; betaine aldehyde from choline (cytochrome c reductase route): step 1/1. Functionally, involved in the biosynthesis of the osmoprotectant glycine betaine. Catalyzes the oxidation of choline to betaine aldehyde and betaine aldehyde to glycine betaine at the same rate. The chain is Oxygen-dependent choline dehydrogenase from Staphylococcus aureus (strain COL).